The chain runs to 94 residues: Small ribosomal subunit protein bS18 (94 aa).

This sequence belongs to the bacterial ribosomal protein bS18 family. In terms of assembly, part of the 30S ribosomal subunit. Forms a tight heterodimer with protein bS6.

In terms of biological role, binds as a heterodimer with protein bS6 to the central domain of the 16S rRNA, where it helps stabilize the platform of the 30S subunit. This is Small ribosomal subunit protein bS18 from Leptospira biflexa serovar Patoc (strain Patoc 1 / Ames).